The following is a 74-amino-acid chain: Small ribosomal subunit protein eS28 (74 aa).

This sequence belongs to the eukaryotic ribosomal protein eS28 family.

In Halorubrum lacusprofundi (strain ATCC 49239 / DSM 5036 / JCM 8891 / ACAM 34), this protein is Small ribosomal subunit protein eS28.